The chain runs to 436 residues: Histidine--tRNA ligase (436 aa).

The protein belongs to the class-II aminoacyl-tRNA synthetase family. As to quaternary structure, homodimer.

It is found in the cytoplasm. It catalyses the reaction tRNA(His) + L-histidine + ATP = L-histidyl-tRNA(His) + AMP + diphosphate + H(+). The sequence is that of Histidine--tRNA ligase from Prochlorococcus marinus (strain MIT 9303).